We begin with the raw amino-acid sequence, 347 residues long: NADH-ubiquinone oxidoreductase chain 2 (347 aa).

10 helical membrane-spanning segments follow: residues 1–21, 25–45, 59–79, 96–116, 122–142, 149–169, 200–220, 239–259, 274–294, and 325–345; these read MNPSIFIILLTTLILGTMMVI, HWLLAWIGFEMNMMAFIPIMM, YLLTQATASALLMMAVIINLM, TLMTVALAIKLGLAPFHFWVP, IPLTTGLILLTWQKLAPLSIL, INLYLMLTMSLLSILVGGWGG, LTLLNLLIYITMTFTMFMLFI, IITTLTMLTLLSMGGLPPLSG, DILIMPTFMAITALLNLYFYM, and LLPTAIVISTMLLPLTPMLSI.

Belongs to the complex I subunit 2 family. Core subunit of respiratory chain NADH dehydrogenase (Complex I) which is composed of 45 different subunits. Interacts with TMEM242.

The protein localises to the mitochondrion inner membrane. The catalysed reaction is a ubiquinone + NADH + 5 H(+)(in) = a ubiquinol + NAD(+) + 4 H(+)(out). In terms of biological role, core subunit of the mitochondrial membrane respiratory chain NADH dehydrogenase (Complex I) which catalyzes electron transfer from NADH through the respiratory chain, using ubiquinone as an electron acceptor. Essential for the catalytic activity and assembly of complex I. In Balaenoptera musculus (Blue whale), this protein is NADH-ubiquinone oxidoreductase chain 2.